The primary structure comprises 371 residues: S-adenosylmethionine:tRNA ribosyltransferase-isomerase (371 aa).

The protein belongs to the QueA family. Monomer.

The protein resides in the cytoplasm. It carries out the reaction 7-aminomethyl-7-carbaguanosine(34) in tRNA + S-adenosyl-L-methionine = epoxyqueuosine(34) in tRNA + adenine + L-methionine + 2 H(+). Its pathway is tRNA modification; tRNA-queuosine biosynthesis. Its function is as follows. Transfers and isomerizes the ribose moiety from AdoMet to the 7-aminomethyl group of 7-deazaguanine (preQ1-tRNA) to give epoxyqueuosine (oQ-tRNA). This is S-adenosylmethionine:tRNA ribosyltransferase-isomerase from Rickettsia akari (strain Hartford).